The following is a 294-amino-acid chain: Foldase protein PrsA 1 (294 aa).

An N-terminal signal peptide occupies residues 1–21; it reads MTKLKKVMISVIAATLLLLAG. Cys-22 carries the N-palmitoyl cysteine lipid modification. Cys-22 carries S-diacylglycerol cysteine lipidation. In terms of domain architecture, PpiC spans 135–226; the sequence is EPDITVRHIL…YGYHLIQLVK (92 aa).

This sequence belongs to the PrsA family.

The protein localises to the cell membrane. The enzyme catalyses [protein]-peptidylproline (omega=180) = [protein]-peptidylproline (omega=0). Its function is as follows. Plays a major role in protein secretion by helping the post-translocational extracellular folding of several secreted proteins. The polypeptide is Foldase protein PrsA 1 (prsA1) (Listeria monocytogenes serovar 1/2a (strain ATCC BAA-679 / EGD-e)).